Consider the following 82-residue polypeptide: Small ribosomal subunit protein bS18 (82 aa).

The protein belongs to the bacterial ribosomal protein bS18 family. As to quaternary structure, part of the 30S ribosomal subunit. Forms a tight heterodimer with protein bS6.

Binds as a heterodimer with protein bS6 to the central domain of the 16S rRNA, where it helps stabilize the platform of the 30S subunit. This Sinorhizobium fredii (strain NBRC 101917 / NGR234) protein is Small ribosomal subunit protein bS18.